The following is a 242-amino-acid chain: Aliphatic sulfonates import ATP-binding protein SsuB 1 (242 aa).

The ABC transporter domain occupies 11-227 (VAVRRLSRAF…RPSHPDFEDL (217 aa)). 43 to 50 (GESGSGKT) is a binding site for ATP.

It belongs to the ABC transporter superfamily. Aliphatic sulfonates importer (TC 3.A.1.17.2) family. As to quaternary structure, the complex is composed of two ATP-binding proteins (SsuB), two transmembrane proteins (SsuC) and a solute-binding protein (SsuA).

Its subcellular location is the cell inner membrane. The catalysed reaction is ATP + H2O + aliphatic sulfonate-[sulfonate-binding protein]Side 1 = ADP + phosphate + aliphatic sulfonateSide 2 + [sulfonate-binding protein]Side 1.. Its function is as follows. Part of the ABC transporter complex SsuABC involved in aliphatic sulfonates import. Responsible for energy coupling to the transport system. The chain is Aliphatic sulfonates import ATP-binding protein SsuB 1 from Paracoccus denitrificans (strain Pd 1222).